The chain runs to 431 residues: Adenylosuccinate synthetase (431 aa).

GTP contacts are provided by residues 12-18 (GDEGKGK) and 40-42 (GHT). Asp13 (proton acceptor) is an active-site residue. Mg(2+)-binding residues include Asp13 and Gly40. Residues 13–16 (DEGK), 38–41 (NAGH), Thr131, Arg145, Gln225, Thr240, and Arg304 contribute to the IMP site. His41 functions as the Proton donor in the catalytic mechanism. 300–306 (TNTGRRR) is a binding site for substrate. GTP contacts are provided by residues Arg306, 332–334 (KLD), and 414–416 (STS).

This sequence belongs to the adenylosuccinate synthetase family. Homodimer. Requires Mg(2+) as cofactor.

Its subcellular location is the cytoplasm. The catalysed reaction is IMP + L-aspartate + GTP = N(6)-(1,2-dicarboxyethyl)-AMP + GDP + phosphate + 2 H(+). It functions in the pathway purine metabolism; AMP biosynthesis via de novo pathway; AMP from IMP: step 1/2. In terms of biological role, plays an important role in the de novo pathway of purine nucleotide biosynthesis. Catalyzes the first committed step in the biosynthesis of AMP from IMP. This chain is Adenylosuccinate synthetase, found in Methylocella silvestris (strain DSM 15510 / CIP 108128 / LMG 27833 / NCIMB 13906 / BL2).